The sequence spans 318 residues: Methionyl-tRNA formyltransferase (318 aa).

112–115 contacts (6S)-5,6,7,8-tetrahydrofolate; that stretch reads SLLP.

Belongs to the Fmt family.

It carries out the reaction L-methionyl-tRNA(fMet) + (6R)-10-formyltetrahydrofolate = N-formyl-L-methionyl-tRNA(fMet) + (6S)-5,6,7,8-tetrahydrofolate + H(+). In terms of biological role, attaches a formyl group to the free amino group of methionyl-tRNA(fMet). The formyl group appears to play a dual role in the initiator identity of N-formylmethionyl-tRNA by promoting its recognition by IF2 and preventing the misappropriation of this tRNA by the elongation apparatus. This Citrifermentans bemidjiense (strain ATCC BAA-1014 / DSM 16622 / JCM 12645 / Bem) (Geobacter bemidjiensis) protein is Methionyl-tRNA formyltransferase.